The chain runs to 460 residues: Cyclin-T1-2 (460 aa).

Disordered stretches follow at residues Met1–Ala20 and Gln285–Ser345. Over residues Ser314–Arg324 the composition is skewed to basic and acidic residues. A compositionally biased stretch (polar residues) spans Asn332 to Ser345.

The protein belongs to the cyclin family. Cyclin T subfamily.

This Arabidopsis thaliana (Mouse-ear cress) protein is Cyclin-T1-2 (CYCT1-2).